The primary structure comprises 314 residues: 4-hydroxy-3-methylbut-2-enyl diphosphate reductase (314 aa).

Cysteine 12 contacts [4Fe-4S] cluster. (2E)-4-hydroxy-3-methylbut-2-enyl diphosphate contacts are provided by histidine 43 and histidine 81. Residues histidine 43 and histidine 81 each contribute to the dimethylallyl diphosphate site. The isopentenyl diphosphate site is built by histidine 43 and histidine 81. Residue cysteine 103 participates in [4Fe-4S] cluster binding. Histidine 131 lines the (2E)-4-hydroxy-3-methylbut-2-enyl diphosphate pocket. Dimethylallyl diphosphate is bound at residue histidine 131. Position 131 (histidine 131) interacts with isopentenyl diphosphate. The active-site Proton donor is the glutamate 133. Threonine 170 is a binding site for (2E)-4-hydroxy-3-methylbut-2-enyl diphosphate. Cysteine 198 is a [4Fe-4S] cluster binding site. (2E)-4-hydroxy-3-methylbut-2-enyl diphosphate-binding residues include serine 226, asparagine 228, and serine 271. Residues serine 226, asparagine 228, and serine 271 each coordinate dimethylallyl diphosphate. Residues serine 226, asparagine 228, and serine 271 each coordinate isopentenyl diphosphate.

Belongs to the IspH family. Requires [4Fe-4S] cluster as cofactor.

The enzyme catalyses isopentenyl diphosphate + 2 oxidized [2Fe-2S]-[ferredoxin] + H2O = (2E)-4-hydroxy-3-methylbut-2-enyl diphosphate + 2 reduced [2Fe-2S]-[ferredoxin] + 2 H(+). It carries out the reaction dimethylallyl diphosphate + 2 oxidized [2Fe-2S]-[ferredoxin] + H2O = (2E)-4-hydroxy-3-methylbut-2-enyl diphosphate + 2 reduced [2Fe-2S]-[ferredoxin] + 2 H(+). It participates in isoprenoid biosynthesis; dimethylallyl diphosphate biosynthesis; dimethylallyl diphosphate from (2E)-4-hydroxy-3-methylbutenyl diphosphate: step 1/1. The protein operates within isoprenoid biosynthesis; isopentenyl diphosphate biosynthesis via DXP pathway; isopentenyl diphosphate from 1-deoxy-D-xylulose 5-phosphate: step 6/6. In terms of biological role, catalyzes the conversion of 1-hydroxy-2-methyl-2-(E)-butenyl 4-diphosphate (HMBPP) into a mixture of isopentenyl diphosphate (IPP) and dimethylallyl diphosphate (DMAPP). Acts in the terminal step of the DOXP/MEP pathway for isoprenoid precursor biosynthesis. The sequence is that of 4-hydroxy-3-methylbut-2-enyl diphosphate reductase from Bacillus pumilus (strain SAFR-032).